A 168-amino-acid chain; its full sequence is Cofilin-1-B (168 aa).

A2 is modified (N-acetylalanine). Positions 4 to 153 constitute an ADF-H domain; the sequence is GVMVSDDVVK…NDPCNLADKL (150 aa). A Nuclear localization signal motif is present at residues 30–34; it reads KKRKK.

The protein belongs to the actin-binding proteins ADF family. Inactive when phosphorylated. Phosphorylation levels vary during development. Oocytes contain only the phosphorylated form, and 80-95% of cfl1 protein is phosphorylated in unfertilized eggs. Rapid dephosphorylation occurs within 30 minutes after fertilization. Phosphorylation levels increase again between the morula and blastula stages (5-8 hpf) and then decrease again as gastrulation approaches. Dephosphorylated by pdxp. As to expression, expressed diffusely in both animal and vegetal hemispheres of the oocyte. During cleavage, expression accumulates around the cleavage furrow, along the vegetal membrane, and later in the midbody. Strongly expressed in the animal hemisphere during blastula stages, with most cells showing expression by gastrulation. By stage 17, expression is highest in cells of the developing neuroectoderm, and at stage 24 the notochord, neural tube, neural crest, somites and some cells of the archenteron show high expression. By stage 35, expression has declined in the notochord, but remains in the neural tube, epidermis and a layer of cells in the archenteron. Also highly expressed in the retina and neuronal cell bodies at the base of the cement gland but not the cement gland itself. At stage 38, expression is widespread, being highest in the nervous system and retina. In the adult, expression is high in the brain, heart, oocyte, stomach, and low in skeletal muscle.

The protein localises to the nucleus matrix. Its subcellular location is the cytoplasm. It localises to the cytoskeleton. The protein resides in the cell cortex. It is found in the membrane. Its function is as follows. May play a role in the regulation of cell morphology and cytoskeletal organization. Binds to F-actin and exhibits pH-sensitive F-actin depolymerizing activity. Required for formation of the cleavage furrow during cytokinesis. The chain is Cofilin-1-B (cfl1-b) from Xenopus laevis (African clawed frog).